The primary structure comprises 395 residues: Putative 8-amino-7-oxononanoate synthase (395 aa).

Arg-23 serves as a coordination point for substrate. Gly-110–Phe-111 contributes to the pyridoxal 5'-phosphate binding site. His-135 is a binding site for substrate. Residues Ser-182, Asp-207–His-210, and Thr-239–Lys-242 each bind pyridoxal 5'-phosphate. Residue Lys-242 is modified to N6-(pyridoxal phosphate)lysine. Thr-356 serves as a coordination point for substrate.

It belongs to the class-II pyridoxal-phosphate-dependent aminotransferase family. BioF subfamily. In terms of assembly, homodimer. Pyridoxal 5'-phosphate is required as a cofactor.

The catalysed reaction is 6-carboxyhexanoyl-[ACP] + L-alanine + H(+) = (8S)-8-amino-7-oxononanoate + holo-[ACP] + CO2. Its pathway is cofactor biosynthesis; biotin biosynthesis. Its function is as follows. Catalyzes the decarboxylative condensation of pimeloyl-[acyl-carrier protein] and L-alanine to produce 8-amino-7-oxononanoate (AON), [acyl-carrier protein], and carbon dioxide. This chain is Putative 8-amino-7-oxononanoate synthase (bioF), found in Bacillus thuringiensis subsp. konkukian (strain 97-27).